Consider the following 50-residue polypeptide: Bacteriocin-like protein SboX (50 aa).

In Bacillus subtilis (strain 168), this protein is Bacteriocin-like protein SboX (sboX).